A 367-amino-acid chain; its full sequence is Peroxisome biogenesis protein 16 (367 aa).

The segment at 135–173 (GGETPNEEKDSNQSESQNRAGNSGRNLGPHGLGNQNHHN) is disordered. The segment covering 147–159 (QSESQNRAGNSGR) has biased composition (polar residues). Transmembrane regions (helical) follow at residues 237 to 257 (ALFAIGEVLYITRPLIYVLFI) and 264 to 284 (SWIPWAISLSVDTLGMGLLAN).

This sequence belongs to the peroxin-16 family. In terms of assembly, interacts with APEM9 (via both N- and C-terminus). The detection of an additional immunorelated polypeptide of 52 kDa suggests a post-translational modification of PEX16. As to expression, expressed in roots, siliques, seeds, cotyledons, leaves and flowers. Low expression in leaves and roots.

It is found in the peroxisome membrane. The protein resides in the endoplasmic reticulum membrane. In terms of biological role, involved in the formation of peroxisomes, lipid bodies and protein bodies. This is Peroxisome biogenesis protein 16 from Arabidopsis thaliana (Mouse-ear cress).